The chain runs to 67 residues: Large ribosomal subunit protein uL29 (67 aa).

This sequence belongs to the universal ribosomal protein uL29 family.

This Magnetococcus marinus (strain ATCC BAA-1437 / JCM 17883 / MC-1) protein is Large ribosomal subunit protein uL29.